A 283-amino-acid chain; its full sequence is Zinc-finger homeodomain protein 8 (283 aa).

The segment at 23–68 adopts a ZF-HD dimerization-type; degenerate zinc-finger fold; sequence YKECMRNHAAAMGGQAFDGCGEYMPASPDSLKCAACGCHRSFHRRA. Disordered regions lie at residues 131–171 and 244–283; these read AGRA…TKFT and GLGTGLGTGISGDGDGDDDDTDDSPPRAAVSSPSPSPISV. Residues 148 to 161 show a composition bias toward gly residues; it reads GSAGGSGSGGGGIF. Residues 163 to 226 constitute a DNA-binding region (homeobox); the sequence is RKRFRTKFTP…NHKNQLASSP (64 aa). The segment covering 244–256 has biased composition (gly residues); it reads GLGTGLGTGISGD. Residues 257 to 266 are compositionally biased toward acidic residues; that stretch reads GDGDDDDTDD. Positions 269 to 283 are enriched in low complexity; that stretch reads PRAAVSSPSPSPISV.

In terms of assembly, homo- and heterodimer with other ZFHD proteins.

Its subcellular location is the nucleus. Functionally, putative transcription factor. The chain is Zinc-finger homeodomain protein 8 (ZHD8) from Oryza sativa subsp. japonica (Rice).